The following is a 504-amino-acid chain: Procardosin-A (504 aa).

The signal sequence occupies residues 1–24 (MGTSIKANVLALFLFYLLSPTVFS). The propeptide occupies 25–68 (VSDDGLIRIGLKKRKVDRIDQLRGRRALMEGNARKDFGFRGTVR). Residues 85–501 (YFGEIGIGTP…DYGNLLVGFA (417 aa)) form the Peptidase A1 domain. Residue aspartate 103 is part of the active site. Cysteines 116 and 122 form a disulfide. Asparagine 139 carries N-linked (GlcNAc...) asparagine glycosylation. An RGD motif motif is present at residues 246–248 (RGD). A disulfide bond links cysteine 277 and cysteine 281. Aspartate 286 is an active-site residue. Residues 310–414 (GVMNQQCKTV…YANELCEHLS (105 aa)) constitute a propeptide, plant-specific insert. A Saposin B-type domain is found at 311–416 (VMNQQCKTVV…NELCEHLSTS (106 aa)). 4 disulfides stabilise this stretch: cysteine 316–cysteine 410, cysteine 341–cysteine 382, cysteine 347–cysteine 379, and cysteine 424–cysteine 461. The N-linked (GlcNAc...) asparagine glycan is linked to asparagine 432. Residues 455–457 (KGE) carry the KGE motif motif.

This sequence belongs to the peptidase A1 family. Heterodimer of a light chain and a heavy chain. An intermediate form (35 kDa and 30 kDa subunits) is produced first, and undergoes proteolytic processing to remove the internal plant-specific insert (PSI) and the propeptide. There is some heterogeniety at the cleavage site. Interacts (via RGD or KGE motifs) with PLD1 (via C2 domain). Post-translationally, N-glycosylated. Glycans found at Asn-139 include approximately 6% oligomannose, 82% oligosaccharides of the plant modified type with proximal fucose but without xylose and 6% oligosaccharides of the plant modified type with proximal fucose and xylose. Glycans found at Asn-432 include 14% oligosaccharides of the plant modified type with proximal fucose but without xylose and 86% oligosaccharides of the plant modified type with proximal fucose and xylose. As to expression, detected only in pistils, not in seeds, roots, midribs, bracts, stamens, pollen, vascular or supporting tissues. Detected in seeds. High amounts are detected in the broad outer region of the upper portion of the stigma, towards the lower portion of the stigma it accumulates at the periphery. Within the stigma, expressed mainly in the epidermic papillae, lower levels are found in the cortical parenchyma. Present mainly in epidermal cells within the stye (at protein level). Expressed in young flower buds, and at lower levels in seeds, pollen and bracteas, but not in roots or leaves.

It localises to the microsome membrane. The protein localises to the protein storage vacuole. The protein resides in the secreted. It is found in the cell wall. Its subcellular location is the extracellular space. It localises to the extracellular matrix. Inhibited by the specific aspartic proteinase inhibitors diazoacetyl-noleucine methyl ester and pepstatin. In terms of biological role, aspartic proteinase with a high preference for bonds between hydrophobic residues. Cleaves alpha-lactalbumin but not beta-lactoglobulin. The polypeptide is Procardosin-A (Cynara cardunculus (Cardoon)).